Here is a 378-residue protein sequence, read N- to C-terminus: Glutamate 5-kinase (378 aa).

An ATP-binding site is contributed by K17. The substrate site is built by S58, D145, and N157. ATP is bound by residues 177–178 (TD) and 221–227 (TGGMMTK). A PUA domain is found at 286–364 (VGKLYLDSGA…KEIPTILGYV (79 aa)).

This sequence belongs to the glutamate 5-kinase family.

The protein localises to the cytoplasm. The enzyme catalyses L-glutamate + ATP = L-glutamyl 5-phosphate + ADP. The protein operates within amino-acid biosynthesis; L-proline biosynthesis; L-glutamate 5-semialdehyde from L-glutamate: step 1/2. Catalyzes the transfer of a phosphate group to glutamate to form L-glutamate 5-phosphate. This is Glutamate 5-kinase from Nostoc sp. (strain PCC 7120 / SAG 25.82 / UTEX 2576).